Reading from the N-terminus, the 220-residue chain is ATP phosphoribosyltransferase (220 aa).

It belongs to the ATP phosphoribosyltransferase family. Short subfamily. In terms of assembly, heteromultimer composed of HisG and HisZ subunits.

The protein localises to the cytoplasm. The enzyme catalyses 1-(5-phospho-beta-D-ribosyl)-ATP + diphosphate = 5-phospho-alpha-D-ribose 1-diphosphate + ATP. It functions in the pathway amino-acid biosynthesis; L-histidine biosynthesis; L-histidine from 5-phospho-alpha-D-ribose 1-diphosphate: step 1/9. In terms of biological role, catalyzes the condensation of ATP and 5-phosphoribose 1-diphosphate to form N'-(5'-phosphoribosyl)-ATP (PR-ATP). Has a crucial role in the pathway because the rate of histidine biosynthesis seems to be controlled primarily by regulation of HisG enzymatic activity. This chain is ATP phosphoribosyltransferase, found in Janthinobacterium sp. (strain Marseille) (Minibacterium massiliensis).